Reading from the N-terminus, the 296-residue chain is Light-independent protochlorophyllide reductase iron-sulfur ATP-binding protein (296 aa).

ATP is bound by residues 39–44 (GIGKST) and Lys68. Ser43 is a binding site for Mg(2+). Cys124 and Cys158 together coordinate [4Fe-4S] cluster. 209–210 (NR) serves as a coordination point for ATP.

Belongs to the NifH/BchL/ChlL family. As to quaternary structure, homodimer. Protochlorophyllide reductase is composed of three subunits; ChlL, ChlN and ChlB. [4Fe-4S] cluster is required as a cofactor.

The enzyme catalyses chlorophyllide a + oxidized 2[4Fe-4S]-[ferredoxin] + 2 ADP + 2 phosphate = protochlorophyllide a + reduced 2[4Fe-4S]-[ferredoxin] + 2 ATP + 2 H2O. It participates in porphyrin-containing compound metabolism; chlorophyll biosynthesis (light-independent). In terms of biological role, component of the dark-operative protochlorophyllide reductase (DPOR) that uses Mg-ATP and reduced ferredoxin to reduce ring D of protochlorophyllide (Pchlide) to form chlorophyllide a (Chlide). This reaction is light-independent. The L component serves as a unique electron donor to the NB-component of the complex, and binds Mg-ATP. The polypeptide is Light-independent protochlorophyllide reductase iron-sulfur ATP-binding protein (Prochlorococcus marinus (strain MIT 9313)).